A 203-amino-acid chain; its full sequence is MFEGPVQDLIDELGKLPGIGPKSAQRIAFHLLSVEPPDIDRLTAVLGRIRDGVTFCSVCGNVSDEERCRICSDPRRDASLVCVVEEPKDVQAVERTREFRGRYHVLGGALDPLSGIGPEQLRIRELLNRIGERVEGVDVAEVIIATDPNTEGEATATYLVRMLRDIPGLTVTRIASGLPMGGDLEFADELTLGRALAGRRAMV.

The segment at 56–71 adopts a C4-type zinc-finger fold; it reads CSVCGNVSDEERCRIC. Positions 79–179 constitute a Toprim domain; sequence SLVCVVEEPK…TVTRIASGLP (101 aa).

This sequence belongs to the RecR family.

May play a role in DNA repair. It seems to be involved in an RecBC-independent recombinational process of DNA repair. It may act with RecF and RecO. The sequence is that of Recombination protein RecR from Mycolicibacterium smegmatis (strain ATCC 700084 / mc(2)155) (Mycobacterium smegmatis).